We begin with the raw amino-acid sequence, 1857 residues long: U3 small nucleolar RNA-associated protein 10 (1857 aa).

The helical transmembrane segment at 267–287 (LTAYSIISVLSSLVPLSADLV) threads the bilayer. One copy of the HEAT repeat lies at 1817–1855 (LIPYIAELLEDDDEEVELEVRNGLVRVIENVLGEPLDRY).

Belongs to the HEATR1/UTP10 family. In terms of assembly, component of the ribosomal small subunit (SSU) processome.

It localises to the nucleus. It is found in the nucleolus. Its subcellular location is the membrane. Its function is as follows. Involved in nucleolar processing of pre-18S ribosomal RNA. Involved in ribosome biosynthesis. The sequence is that of U3 small nucleolar RNA-associated protein 10 from Debaryomyces hansenii (strain ATCC 36239 / CBS 767 / BCRC 21394 / JCM 1990 / NBRC 0083 / IGC 2968) (Yeast).